The chain runs to 175 residues: Disulfide bond formation protein B (175 aa).

Residues M1–V13 are Cytoplasmic-facing. The helical transmembrane segment at L14–Y30 threads the bilayer. The Periplasmic segment spans residues L31 to Y48. C40 and C43 form a disulfide bridge. The chain crosses the membrane as a helical span at residues A49 to G65. Residues R66–M70 lie on the Cytoplasmic side of the membrane. A helical transmembrane segment spans residues T71–A88. Over R89 to N144 the chain is Periplasmic. A disulfide bridge links C103 with C130. A helical membrane pass occupies residues W145–R163. The Cytoplasmic portion of the chain corresponds to A164 to A175.

The protein belongs to the DsbB family.

It localises to the cell inner membrane. Required for disulfide bond formation in some periplasmic proteins. Acts by oxidizing the DsbA protein. The protein is Disulfide bond formation protein B of Paracidovorax citrulli (strain AAC00-1) (Acidovorax citrulli).